The chain runs to 237 residues: Phosphoribosylaminoimidazole-succinocarboxamide synthase (237 aa).

This sequence belongs to the SAICAR synthetase family.

It carries out the reaction 5-amino-1-(5-phospho-D-ribosyl)imidazole-4-carboxylate + L-aspartate + ATP = (2S)-2-[5-amino-1-(5-phospho-beta-D-ribosyl)imidazole-4-carboxamido]succinate + ADP + phosphate + 2 H(+). Its pathway is purine metabolism; IMP biosynthesis via de novo pathway; 5-amino-1-(5-phospho-D-ribosyl)imidazole-4-carboxamide from 5-amino-1-(5-phospho-D-ribosyl)imidazole-4-carboxylate: step 1/2. This chain is Phosphoribosylaminoimidazole-succinocarboxamide synthase, found in Fusobacterium nucleatum subsp. nucleatum (strain ATCC 25586 / DSM 15643 / BCRC 10681 / CIP 101130 / JCM 8532 / KCTC 2640 / LMG 13131 / VPI 4355).